The chain runs to 272 residues: ATP synthase subunit a (272 aa).

The next 5 membrane-spanning stretches (helical) occupy residues 41 to 61, 101 to 121, 147 to 167, 221 to 241, and 243 to 263; these read VLNI…LVLF, VIAP…FMDL, DVNI…FYSI, LIFI…LSVP, and AIFH…LTIV.

This sequence belongs to the ATPase A chain family. In terms of assembly, F-type ATPases have 2 components, CF(1) - the catalytic core - and CF(0) - the membrane proton channel. CF(1) has five subunits: alpha(3), beta(3), gamma(1), delta(1), epsilon(1). CF(0) has three main subunits: a(1), b(2) and c(9-12). The alpha and beta chains form an alternating ring which encloses part of the gamma chain. CF(1) is attached to CF(0) by a central stalk formed by the gamma and epsilon chains, while a peripheral stalk is formed by the delta and b chains.

It localises to the cell inner membrane. Functionally, key component of the proton channel; it plays a direct role in the translocation of protons across the membrane. This is ATP synthase subunit a from Erwinia tasmaniensis (strain DSM 17950 / CFBP 7177 / CIP 109463 / NCPPB 4357 / Et1/99).